Reading from the N-terminus, the 360-residue chain is Phospho-N-acetylmuramoyl-pentapeptide-transferase (360 aa).

The next 10 helical transmembrane spans lie at 21–41 (YLTL…ILIG), 73–93 (TMGG…WADL), 97–117 (YVLV…VDDY), 134–154 (YFWQ…SATM), 168–188 (VFPQ…VGTS), 199–219 (GLAI…AYVT), 239–259 (LVIV…FNTY), 263–283 (VFMG…LAVL), 288–308 (LVLI…ILQV), and 338–358 (VIVR…ATLK).

Belongs to the glycosyltransferase 4 family. MraY subfamily. The cofactor is Mg(2+).

Its subcellular location is the cell inner membrane. The enzyme catalyses UDP-N-acetyl-alpha-D-muramoyl-L-alanyl-gamma-D-glutamyl-meso-2,6-diaminopimeloyl-D-alanyl-D-alanine + di-trans,octa-cis-undecaprenyl phosphate = di-trans,octa-cis-undecaprenyl diphospho-N-acetyl-alpha-D-muramoyl-L-alanyl-D-glutamyl-meso-2,6-diaminopimeloyl-D-alanyl-D-alanine + UMP. It functions in the pathway cell wall biogenesis; peptidoglycan biosynthesis. In terms of biological role, catalyzes the initial step of the lipid cycle reactions in the biosynthesis of the cell wall peptidoglycan: transfers peptidoglycan precursor phospho-MurNAc-pentapeptide from UDP-MurNAc-pentapeptide onto the lipid carrier undecaprenyl phosphate, yielding undecaprenyl-pyrophosphoryl-MurNAc-pentapeptide, known as lipid I. The polypeptide is Phospho-N-acetylmuramoyl-pentapeptide-transferase (Alteromonas mediterranea (strain DSM 17117 / CIP 110805 / LMG 28347 / Deep ecotype)).